The sequence spans 159 residues: NADH-quinone oxidoreductase subunit I (159 aa).

2 consecutive 4Fe-4S ferredoxin-type domains span residues 51–80 and 90–119; these read RRYEHGEERCIACKLCEAICPAQAIVIEAD and TRYDIDMTKCIYCGLCQEACPVDAIVEGPN. The [4Fe-4S] cluster site is built by cysteine 60, cysteine 63, cysteine 66, cysteine 70, cysteine 99, cysteine 102, cysteine 105, and cysteine 109.

The protein belongs to the complex I 23 kDa subunit family. In terms of assembly, NDH-1 is composed of 14 different subunits. Subunits NuoA, H, J, K, L, M, N constitute the membrane sector of the complex. It depends on [4Fe-4S] cluster as a cofactor.

The protein localises to the cell inner membrane. The catalysed reaction is a quinone + NADH + 5 H(+)(in) = a quinol + NAD(+) + 4 H(+)(out). In terms of biological role, NDH-1 shuttles electrons from NADH, via FMN and iron-sulfur (Fe-S) centers, to quinones in the respiratory chain. The immediate electron acceptor for the enzyme in this species is believed to be ubiquinone. Couples the redox reaction to proton translocation (for every two electrons transferred, four hydrogen ions are translocated across the cytoplasmic membrane), and thus conserves the redox energy in a proton gradient. The chain is NADH-quinone oxidoreductase subunit I from Rickettsia rickettsii (strain Sheila Smith).